Reading from the N-terminus, the 206-residue chain is Heat shock protein beta-1 (206 aa).

Position 12 is an omega-N-methylarginine (arginine 12). Serine 13 is subject to Phosphoserine. At serine 15 the chain carries Phosphoserine; by MAPKAPK2 and MAPKAPK3. The residue at position 27 (serine 27) is a Phosphoserine. The interval 74-206 (RPAFSRALNR…GPESEQSGAK (133 aa)) is interaction with TGFB1I1. Residues 80-188 (ALNRQLSSGV…QSAEITIPVT (109 aa)) enclose the sHSP domain. Serine 86 is subject to Phosphoserine; by MAPKAPK2, MAPKAPK3 and MAPKAPK5. Serine 87, serine 90, and serine 102 each carry phosphoserine. Lysine 127 bears the N6-acetyllysine mark. Threonine 178 bears the Phosphothreonine mark. Serine 180 and serine 200 each carry phosphoserine.

It belongs to the small heat shock protein (HSP20) family. As to quaternary structure, homooligomer. Homodimer; becomes monomeric upon activation. Heterooligomer; with HSPB6. Associates with alpha- and beta-tubulin. Interacts with TGFB1I1. Interacts with CRYAB. Interacts with HSPB8. Interacts with HSPBAP1. Post-translationally, phosphorylated upon exposure to protein kinase C activators and heat shock. Phosphorylation by MAPKAPK2 and MAPKAPK3 in response to stress dissociates HSPB1 from large small heat-shock protein (sHsps) oligomers and impairs its chaperone activity and ability to protect against oxidative stress effectively. Phosphorylation by MAPKAPK5 in response to PKA stimulation induces F-actin rearrangement. As to expression, expressed in a variety of tissues. High levels in lung, adrenal, xiphoid, adipose tissue, heart and striated and smooth muscle, lower levels in the CNS. Adult levels are much higher in the slow-twitch soleus muscle than in the fast-twitch rectus femoris and extensor digitorum muscles.

The protein resides in the cytoplasm. It localises to the nucleus. Its subcellular location is the cytoskeleton. The protein localises to the spindle. Its function is as follows. Small heat shock protein which functions as a molecular chaperone probably maintaining denatured proteins in a folding-competent state. Plays a role in stress resistance and actin organization. Through its molecular chaperone activity may regulate numerous biological processes including the phosphorylation and the axonal transport of neurofilament proteins. The chain is Heat shock protein beta-1 (Hspb1) from Rattus norvegicus (Rat).